The primary structure comprises 349 residues: Ornithine carbamoyltransferase, mitochondrial (349 aa).

Carbamoyl phosphate is bound by residues 73-76, R124, H151, and Q154; that span reads STRT. N195, D261, S265, and M266 together coordinate L-ornithine. C303 serves as the catalytic Proton acceptor. Carbamoyl phosphate contacts are provided by residues 303–304 and R330; that span reads CL.

The protein belongs to the aspartate/ornithine carbamoyltransferase superfamily. OTCase family. Homotrimer.

It localises to the mitochondrion matrix. It carries out the reaction carbamoyl phosphate + L-ornithine = L-citrulline + phosphate + H(+). The protein operates within amino-acid biosynthesis; L-arginine biosynthesis; L-arginine from L-ornithine and carbamoyl phosphate: step 1/3. The protein is Ornithine carbamoyltransferase, mitochondrial of Coccidioides immitis (strain RS) (Valley fever fungus).